Consider the following 552-residue polypeptide: Chaperonin GroEL (552 aa).

ATP-binding positions include 30–33 (TLGP), lysine 51, 87–91 (DGTTT), glycine 415, and aspartate 499.

The protein belongs to the chaperonin (HSP60) family. As to quaternary structure, forms a cylinder of 14 subunits composed of two heptameric rings stacked back-to-back. Interacts with the co-chaperonin GroES.

It is found in the cytoplasm. The catalysed reaction is ATP + H2O + a folded polypeptide = ADP + phosphate + an unfolded polypeptide.. Its function is as follows. Together with its co-chaperonin GroES, plays an essential role in assisting protein folding. The GroEL-GroES system forms a nano-cage that allows encapsulation of the non-native substrate proteins and provides a physical environment optimized to promote and accelerate protein folding. In Hamiltonella defensa subsp. Acyrthosiphon pisum (strain 5AT), this protein is Chaperonin GroEL.